Here is a 359-residue protein sequence, read N- to C-terminus: Nicotinate-nucleotide--dimethylbenzimidazole phosphoribosyltransferase (359 aa).

Glutamate 318 serves as the catalytic Proton acceptor.

This sequence belongs to the CobT family. As to quaternary structure, homodimer.

The enzyme catalyses 5,6-dimethylbenzimidazole + nicotinate beta-D-ribonucleotide = alpha-ribazole 5'-phosphate + nicotinate + H(+). The protein operates within nucleoside biosynthesis; alpha-ribazole biosynthesis; alpha-ribazole from 5,6-dimethylbenzimidazole: step 1/2. Functionally, catalyzes the synthesis of alpha-ribazole-5'-phosphate from nicotinate mononucleotide (NAMN) and 5,6-dimethylbenzimidazole (DMB). The polypeptide is Nicotinate-nucleotide--dimethylbenzimidazole phosphoribosyltransferase (Escherichia coli O17:K52:H18 (strain UMN026 / ExPEC)).